Here is a 61-residue protein sequence, read N- to C-terminus: Small ribosomal subunit protein uS14 (61 aa).

Residues cysteine 24, cysteine 27, cysteine 40, and cysteine 43 each coordinate Zn(2+).

The protein belongs to the universal ribosomal protein uS14 family. Zinc-binding uS14 subfamily. Part of the 30S ribosomal subunit. Contacts proteins S3 and S10. Zn(2+) is required as a cofactor.

In terms of biological role, binds 16S rRNA, required for the assembly of 30S particles and may also be responsible for determining the conformation of the 16S rRNA at the A site. The sequence is that of Small ribosomal subunit protein uS14 from Mycobacterium avium (strain 104).